The primary structure comprises 131 residues: Ribonuclease P protein component (131 aa).

Belongs to the RnpA family. Consists of a catalytic RNA component (M1 or rnpB) and a protein subunit.

It carries out the reaction Endonucleolytic cleavage of RNA, removing 5'-extranucleotides from tRNA precursor.. Its function is as follows. RNaseP catalyzes the removal of the 5'-leader sequence from pre-tRNA to produce the mature 5'-terminus. It can also cleave other RNA substrates such as 4.5S RNA. The protein component plays an auxiliary but essential role in vivo by binding to the 5'-leader sequence and broadening the substrate specificity of the ribozyme. This is Ribonuclease P protein component from Cyanothece sp. (strain PCC 7425 / ATCC 29141).